The sequence spans 352 residues: Isopentenyl-diphosphate delta-isomerase (352 aa).

Residue 6 to 7 (RK) coordinates substrate. Residues 63-65 (AMT), serine 93, and asparagine 122 each bind FMN. A substrate-binding site is contributed by 93 to 95 (SQR). Residue glutamine 160 participates in substrate binding. Glutamate 161 serves as a coordination point for Mg(2+). Residues lysine 192, threonine 221, 271 to 273 (GIR), and 292 to 293 (SQ) each bind FMN.

This sequence belongs to the IPP isomerase type 2 family. Homooctamer. Dimer of tetramers. It depends on FMN as a cofactor. NADPH serves as cofactor. The cofactor is Mg(2+).

The protein localises to the cytoplasm. The catalysed reaction is isopentenyl diphosphate = dimethylallyl diphosphate. In terms of biological role, involved in the biosynthesis of isoprenoids. Catalyzes the 1,3-allylic rearrangement of the homoallylic substrate isopentenyl (IPP) to its allylic isomer, dimethylallyl diphosphate (DMAPP). The sequence is that of Isopentenyl-diphosphate delta-isomerase from Pyrobaculum aerophilum (strain ATCC 51768 / DSM 7523 / JCM 9630 / CIP 104966 / NBRC 100827 / IM2).